The following is a 324-amino-acid chain: DGAT1/2-independent enzyme synthesizing storage lipids (324 aa).

At 1-50 (MIDKNQTCGVGQDSVPYMICLIHILEEWFGVEQLEDYLNFANYLLWVFTP) the chain is on the lumenal side. N-linked (GlcNAc...) asparagine glycosylation occurs at Asn-5. A helical transmembrane segment spans residues 51–71 (LILLILPYFTIFLLYLTIIFL). Residues 72–125 (HIYKRKNVLKEAYSHNLWDGARKTVATLWDGHAAVWHGYEVHGMEKIPEDGPAL) are Cytoplasmic-facing. Residues 126–146 (IIFYHGAIPIDFYYFMAKIFI) traverse the membrane as a helical segment. His-130 is an active-site residue. Topologically, residues 147–324 (HKGRTCRVVA…IMSALLERFH (178 aa)) are lumenal.

It belongs to the diacylglycerol acyltransferase family. Highly divergent.

It localises to the endoplasmic reticulum membrane. It carries out the reaction a 1,2-diacylglycerol + a 1,2-diacyl-sn-glycero-3-phosphocholine = a triacylglycerol + a 1-acyl-sn-glycero-3-phosphocholine. The enzyme catalyses a 1-O-alkyl-2-acyl-sn-glycero-3-phosphocholine + a 1,2-diacylglycerol = a 1-O-alkyl-sn-glycero-3-phosphocholine + a triacylglycerol. It catalyses the reaction a 2-acylglycerol + an acyl-CoA = a 1,2-diacylglycerol + CoA. The catalysed reaction is an acyl-CoA + a 1,2-diacyl-sn-glycerol = a triacyl-sn-glycerol + CoA. It carries out the reaction 2-(9Z-octadecenoyl)-glycerol + (9Z)-octadecenoyl-CoA = 1,2-di-(9Z-octadecenoyl)-glycerol + CoA. The enzyme catalyses 1,2-di-(9Z-octadecenoyl)-sn-glycerol + (9Z)-octadecenoyl-CoA = 1,2,3-tri-(9Z-octadecenoyl)-glycerol + CoA. Acyltransferase activity is specifically inhibited by TMX1 at the endoplasmic reticulum, restricting accumulation of triacylglycerol. In terms of biological role, catalytic subunit of the alternative triglyceride biosynthesis pathway, which mediates formation of triacylglycerol from diacylglycerol and membrane phospholipids. Synthesizes triacylglycerol at the expense of membrane phospholipids, such as phosphatidylcholine (PC) and its ether-linked form (ePC), thereby altering the composition of membranes. The alternative triglyceride biosynthesis pathway is probably required to provide the energy required for rapid growth when fuel sources are limiting. It maintains mitochondrial function during periods of extracellular lipid starvation. Can also use acyl-CoA as donor: acts as a acyl-CoA:monoacylglycerol acyltransferase (MGAT), but also shows acyl-CoA:diacylglycerol acyltransferase (DGAT) activity. This is DGAT1/2-independent enzyme synthesizing storage lipids from Homo sapiens (Human).